We begin with the raw amino-acid sequence, 880 residues long: DNA-directed RNA polymerase subunit Rpo1N (880 aa).

Residues Cys58, Cys61, Cys68, His71, Cys98, Cys101, Cys146, and Cys149 each coordinate Zn(2+). Mg(2+) is bound by residues Asp456, Asp458, and Asp460. Positions 573, 575, 580, 582, and 584 each coordinate Zn(2+).

This sequence belongs to the RNA polymerase beta' chain family. Part of the 13-subunit RNA polymerase complex. Interacts with TFS4. As to quaternary structure, (Microbial infection) Binds viral protein RIP, which blocks global transcription. Mg(2+) serves as cofactor. The cofactor is Zn(2+).

It localises to the cytoplasm. The enzyme catalyses RNA(n) + a ribonucleoside 5'-triphosphate = RNA(n+1) + diphosphate. (Microbial infection) Binds to viral protein RIP (AC Q3V4R7), which inhibits global transcription. Its function is as follows. DNA-dependent RNA polymerase (RNAP) catalyzes the transcription of DNA into RNA using the four ribonucleoside triphosphates as substrates. Forms the clamp head domain. The polypeptide is DNA-directed RNA polymerase subunit Rpo1N (Sulfolobus acidocaldarius (strain ATCC 33909 / DSM 639 / JCM 8929 / NBRC 15157 / NCIMB 11770)).